The following is a 1347-amino-acid chain: Agglutinin-like protein 5 (1347 aa).

The N-terminal stretch at 1 to 19 (MIQQFTLLFLYLSFATAKA) is a signal peptide. Cystine bridges form between C73–C150, C96–C112, C205–C298, and C227–C256. ALS repeat units follow at residues 365–396 (TTIT…VDVP), 401–432 (TTVT…VQVP), 438–469 (TTTT…VREP), 474–505 (VTTT…VREP), 510–541 (VTTT…IKEP), and 546–577 (VTTT…IHDP). Disordered stretches follow at residues 580–678 (ESSS…WDSS), 704–725 (VSNS…SNTS), and 789–813 (SDPT…FSDE). 2 N-linked (GlcNAc...) asparagine glycosylation sites follow: N593 and N723. N847 carries N-linked (GlcNAc...) asparagine glycosylation. Disordered regions lie at residues 855-896 (ESES…STVT), 909-964 (TGMP…KSSV), 977-1021 (SETS…KESS), 1062-1111 (EDNE…VSSL), and 1139-1180 (ATSL…NRLS). Composition is skewed to low complexity over residues 856 to 870 (SESS…ASES), 879 to 896 (SEST…STVT), and 921 to 939 (TSDV…PTSA). Over residues 940 to 950 (EQSITDNPNID) the composition is skewed to polar residues. Low complexity-rich tracts occupy residues 951 to 964 (SSQT…KSSV) and 977 to 1002 (SETS…NSDT). Polar residues-rich tracts occupy residues 1003–1021 (GNIN…KESS) and 1066–1088 (PNTF…SVLS). Composition is skewed to low complexity over residues 1097 to 1111 (IKTS…VSSL) and 1140 to 1158 (TSLR…SSGT). 2 N-linked (GlcNAc...) asparagine glycosylation sites follow: N1229 and N1254. S1326 carries GPI-anchor amidated serine lipidation. Residues 1327–1347 (SATKHPSWLLKFISVALFFFL) constitute a propeptide, removed in mature form.

The protein belongs to the ALS family. In terms of assembly, forms homodimers through the tandem repeats. Aggregates in amyloid-like structures, with self-propagating secondary-structure changes, amyloid-characteristic dye binding, and induced birefringence. In terms of processing, the GPI-anchor is attached to the protein in the endoplasmic reticulum and serves to target the protein to the cell surface. There, the glucosamine-inositol phospholipid moiety is cleaved off and the GPI-modified mannoprotein is covalently attached via its lipidless GPI glycan remnant to the 1,6-beta-glucan of the outer cell wall layer.

It is found in the cell membrane. The protein localises to the secreted. The protein resides in the cell wall. Its function is as follows. Cell surface adhesion protein which mediates both yeast-to-host tissue adherence and yeast aggregation. Plays an important role in the pathogenesis of C.albicans infections. Forms amyloid structures, essential for cell-cell association and cell-substrate adhesion to polystyrene. This is Agglutinin-like protein 5 (ALS5) from Candida albicans (strain SC5314 / ATCC MYA-2876) (Yeast).